Consider the following 319-residue polypeptide: Acetyl-coenzyme A carboxylase carboxyl transferase subunit alpha (319 aa).

The CoA carboxyltransferase C-terminal domain maps to 35–296 (NIDEEVHRLR…KAQLLADLAD (262 aa)).

Belongs to the AccA family. As to quaternary structure, acetyl-CoA carboxylase is a heterohexamer composed of biotin carboxyl carrier protein (AccB), biotin carboxylase (AccC) and two subunits each of ACCase subunit alpha (AccA) and ACCase subunit beta (AccD).

Its subcellular location is the cytoplasm. It carries out the reaction N(6)-carboxybiotinyl-L-lysyl-[protein] + acetyl-CoA = N(6)-biotinyl-L-lysyl-[protein] + malonyl-CoA. The protein operates within lipid metabolism; malonyl-CoA biosynthesis; malonyl-CoA from acetyl-CoA: step 1/1. Its function is as follows. Component of the acetyl coenzyme A carboxylase (ACC) complex. First, biotin carboxylase catalyzes the carboxylation of biotin on its carrier protein (BCCP) and then the CO(2) group is transferred by the carboxyltransferase to acetyl-CoA to form malonyl-CoA. This Escherichia coli O127:H6 (strain E2348/69 / EPEC) protein is Acetyl-coenzyme A carboxylase carboxyl transferase subunit alpha.